The sequence spans 280 residues: Large ribosomal subunit protein uL2 (280 aa).

Disordered regions lie at residues 33–55 (LTEGLTKSGGRNNTGRITSRRRG) and 199–266 (DNSN…KASQ). The segment covering 209–219 (GRMRHKGKRPS) has biased composition (basic residues).

It belongs to the universal ribosomal protein uL2 family. As to quaternary structure, part of the 50S ribosomal subunit. Forms a bridge to the 30S subunit in the 70S ribosome.

Functionally, one of the primary rRNA binding proteins. Required for association of the 30S and 50S subunits to form the 70S ribosome, for tRNA binding and peptide bond formation. It has been suggested to have peptidyltransferase activity; this is somewhat controversial. Makes several contacts with the 16S rRNA in the 70S ribosome. The polypeptide is Large ribosomal subunit protein uL2 (Ruegeria sp. (strain TM1040) (Silicibacter sp.)).